A 280-amino-acid polypeptide reads, in one-letter code: Pantothenate synthetase (280 aa).

Residue 26–33 (MGNLHEGH) coordinates ATP. Residue His33 is the Proton donor of the active site. Residue Gln57 participates in (R)-pantoate binding. Beta-alanine is bound at residue Gln57. An ATP-binding site is contributed by 145–148 (GKKD). Gln151 is a binding site for (R)-pantoate. Residues Val174 and 182-185 (LSSR) contribute to the ATP site.

Belongs to the pantothenate synthetase family. Homodimer.

It is found in the cytoplasm. The catalysed reaction is (R)-pantoate + beta-alanine + ATP = (R)-pantothenate + AMP + diphosphate + H(+). The protein operates within cofactor biosynthesis; (R)-pantothenate biosynthesis; (R)-pantothenate from (R)-pantoate and beta-alanine: step 1/1. Functionally, catalyzes the condensation of pantoate with beta-alanine in an ATP-dependent reaction via a pantoyl-adenylate intermediate. This chain is Pantothenate synthetase, found in Bordetella bronchiseptica (strain ATCC BAA-588 / NCTC 13252 / RB50) (Alcaligenes bronchisepticus).